The sequence spans 119 residues: Ig heavy chain V region T601 (119 aa).

Positions 1–112 constitute an Ig-like domain; sequence EVKLLESGGG…GYFDVWGAGT (112 aa).

This chain is Ig heavy chain V region T601, found in Mus musculus (Mouse).